The following is a 505-amino-acid chain: Lysine--tRNA ligase (505 aa).

2 residues coordinate Mg(2+): Glu415 and Glu422.

The protein belongs to the class-II aminoacyl-tRNA synthetase family. As to quaternary structure, homodimer. Mg(2+) serves as cofactor.

It is found in the cytoplasm. It catalyses the reaction tRNA(Lys) + L-lysine + ATP = L-lysyl-tRNA(Lys) + AMP + diphosphate. The polypeptide is Lysine--tRNA ligase (Serratia proteamaculans (strain 568)).